We begin with the raw amino-acid sequence, 244 residues long: ATP synthase subunit 4, mitochondrial (244 aa).

Residues 1 to 36 (MASRLAKSAICAARVRPVLSSRTIPAAATTLTSTRS) constitute a mitochondrion transit peptide.

This sequence belongs to the eukaryotic ATPase B chain family. F-type ATPases have 2 components, CF(1) - the catalytic core - and CF(0) - the membrane proton channel. In yeast, the dimeric form of ATP synthase consists of 17 polypeptides: alpha, beta, gamma, delta, epsilon, 4 (B), 5 (OSCP), 6 (A), 8, 9 (C), d, E (Tim11), f, g, h, i/j and k.

It is found in the mitochondrion. The protein localises to the mitochondrion inner membrane. In terms of biological role, mitochondrial membrane ATP synthase (F(1)F(0) ATP synthase or Complex V) produces ATP from ADP in the presence of a proton gradient across the membrane which is generated by electron transport complexes of the respiratory chain. F-type ATPases consist of two structural domains, F(1) - containing the extramembraneous catalytic core, and F(0) - containing the membrane proton channel, linked together by a central stalk and a peripheral stalk. During catalysis, ATP synthesis in the catalytic domain of F(1) is coupled via a rotary mechanism of the central stalk subunits to proton translocation. Part of the complex F(0) domain and the peripheric stalk, which acts as a stator to hold the catalytic alpha(3)beta(3) subcomplex and subunit a/ATP6 static relative to the rotary elements. The sequence is that of ATP synthase subunit 4, mitochondrial (ATP4) from Paracoccidioides brasiliensis.